Reading from the N-terminus, the 95-residue chain is Large ribosomal subunit protein uL23 (95 aa).

This sequence belongs to the universal ribosomal protein uL23 family. As to quaternary structure, part of the 50S ribosomal subunit. Contacts protein L29, and trigger factor when it is bound to the ribosome.

In terms of biological role, one of the early assembly proteins it binds 23S rRNA. One of the proteins that surrounds the polypeptide exit tunnel on the outside of the ribosome. Forms the main docking site for trigger factor binding to the ribosome. This Lawsonia intracellularis (strain PHE/MN1-00) protein is Large ribosomal subunit protein uL23.